A 98-amino-acid polypeptide reads, in one-letter code: Plastocyanin (98 aa).

The Plastocyanin-like domain occupies 1-98 (DVTVKLGADS…AGMKGTITVQ (98 aa)). Residues His-38, Cys-83, His-86, and Met-91 each coordinate Cu cation.

It belongs to the plastocyanin family. It depends on Cu(2+) as a cofactor.

It localises to the plastid. The protein resides in the chloroplast thylakoid membrane. In terms of biological role, participates in electron transfer between P700 and the cytochrome b6-f complex in photosystem I. This Scenedesmus fuscus (Green alga) protein is Plastocyanin (petE).